We begin with the raw amino-acid sequence, 205 residues long: RNA pyrophosphohydrolase (205 aa).

One can recognise a Nudix hydrolase domain in the interval 6–149 (GFRPNVGIVL…KRGVYARALR (144 aa)). The short motif at 38 to 59 (GGMNTDETPVEAMYRELREETG) is the Nudix box element. Residues 178–205 (GSSAAGHDSPRKRPRKRNGARAMRINND) are disordered. The segment covering 187-196 (PRKRPRKRNG) has biased composition (basic residues).

This sequence belongs to the Nudix hydrolase family. RppH subfamily. A divalent metal cation is required as a cofactor.

Accelerates the degradation of transcripts by removing pyrophosphate from the 5'-end of triphosphorylated RNA, leading to a more labile monophosphorylated state that can stimulate subsequent ribonuclease cleavage. The protein is RNA pyrophosphohydrolase of Xanthomonas axonopodis pv. citri (strain 306).